The chain runs to 99 residues: A-type ATP synthase subunit F (99 aa).

Belongs to the V-ATPase F subunit family. Has multiple subunits with at least A(3), B(3), C, D, E, F, H, I and proteolipid K(x).

It localises to the cell membrane. Component of the A-type ATP synthase that produces ATP from ADP in the presence of a proton gradient across the membrane. In Methanococcus maripaludis (strain C5 / ATCC BAA-1333), this protein is A-type ATP synthase subunit F.